We begin with the raw amino-acid sequence, 244 residues long: Homeobox-leucine zipper protein HOX14 (244 aa).

Residues 25-64 (ASGEVQGERPRARRRRRRGARCVGGGGGGGEVDGGDPKKR) are disordered. A compositionally biased stretch (basic residues) spans 35-44 (RARRRRRRGA). The segment covering 46-56 (CVGGGGGGGEV) has biased composition (gly residues). Positions 59–118 (GDPKKRRLSDEQVEMLELSFREERKLETGRKVHLASELGLDPKQVAVWFQNRRARHKSKL) form a DNA-binding region, homeobox. Residues 108–167 (QNRRARHKSKLLEEEFSKLKHAHDAAILHKCHLENEVLRLKERLVVAEEEVRRLRSAAGS) adopt a coiled-coil conformation.

It belongs to the HD-ZIP homeobox family. Class I subfamily. As to expression, expressed in roots, stems, leaf blades and panicles.

It is found in the nucleus. Probable transcription factor. The sequence is that of Homeobox-leucine zipper protein HOX14 (HOX14) from Oryza sativa subsp. indica (Rice).